We begin with the raw amino-acid sequence, 52 residues long: Nuclear respiratory factor 1 (52 aa).

Belongs to the NRF1/Ewg family. As to quaternary structure, homodimer. Binds DNA as a dimer. Interacts with PPRC1. Post-translationally, phosphorylation enhances DNA binding. Expressed at high levels in the lung and testis, at intermediate levels in the kidney, heart and brain and at low levels in the muscle and liver.

It localises to the nucleus. In terms of biological role, transcription factor that activates the expression of the EIF2S1 (EIF2-alpha) gene. Links the transcriptional modulation of key metabolic genes to cellular growth and development. Implicated in the control of nuclear genes required for respiration, heme biosynthesis, and mitochondrial DNA transcription and replication. In Rattus norvegicus (Rat), this protein is Nuclear respiratory factor 1 (Nrf1).